Consider the following 65-residue polypeptide: Large ribosomal subunit protein bL35 (65 aa).

Residues 1-28 form a disordered region; sequence MPKIKTNRGAAKRFRKTGSGKIRRNKAF. The segment covering 10–26 has biased composition (basic residues); it reads AAKRFRKTGSGKIRRNK.

Belongs to the bacterial ribosomal protein bL35 family.

The sequence is that of Large ribosomal subunit protein bL35 from Syntrophotalea carbinolica (strain DSM 2380 / NBRC 103641 / GraBd1) (Pelobacter carbinolicus).